The primary structure comprises 507 residues: Sensor protein CseC (507 aa).

The interval 1–42 is disordered; the sequence is MRGFFRQRRSVSPPGHPYDRTGPGEHAGPGARTGPGGRPRVL. A compositionally biased stretch (gly residues) spans 25–37; that stretch reads EHAGPGARTGPGG. 2 consecutive transmembrane segments (helical) span residues 60 to 80 and 183 to 203; these read LSAA…LVVH and ALVI…VLIG. In terms of domain architecture, HAMP spans 204–260; the sequence is GQLSRRLREAAAAANRVASGEPDVRVRDAIGGVVRDETDDVARAVDAMADALQQRIE. A Histidine kinase domain is found at 268 to 470; sequence DIAHELRTPV…VAVLWLPEHA (203 aa). His-271 carries the post-translational modification Phosphohistidine; by autocatalysis. Residues 472–507 form a disordered region; the sequence is TNTGSYPMLPDRSKSGASSSARDMSREASQGMSRKP. Residues 486–507 show a composition bias toward polar residues; it reads SGASSSARDMSREASQGMSRKP.

The protein localises to the cell membrane. It catalyses the reaction ATP + protein L-histidine = ADP + protein N-phospho-L-histidine.. Member of the two-component regulatory system CseB/CseC involved in the stability of the cell envelope, through activation of transcription of RNA polymerase sigma-E factor. CseC functions as a membrane-associated protein kinase that phosphorylates CseB in response to changes in the cell envelope. The protein is Sensor protein CseC (cseC) of Streptomyces coelicolor (strain ATCC BAA-471 / A3(2) / M145).